Consider the following 451-residue polypeptide: UDP-N-acetylmuramate--L-alanine ligase (451 aa).

Residue 110–116 (GTHGKTT) coordinates ATP.

This sequence belongs to the MurCDEF family.

The protein localises to the cytoplasm. The enzyme catalyses UDP-N-acetyl-alpha-D-muramate + L-alanine + ATP = UDP-N-acetyl-alpha-D-muramoyl-L-alanine + ADP + phosphate + H(+). It participates in cell wall biogenesis; peptidoglycan biosynthesis. Functionally, cell wall formation. This is UDP-N-acetylmuramate--L-alanine ligase from Francisella tularensis subsp. tularensis (strain SCHU S4 / Schu 4).